The following is a 338-amino-acid chain: MASPPILSRESPVLGLEEEKKSDGGNSEVNIDPSASSSLKEDVDGEEGADTKIDPHLLEEDDLNPVEDYDSKNQKVVEASKLDLDATSTVWAESLSINREASISQSGIVDNEMEKKVEEEEEFDEFDDFGEFEHDIPICTFMGDWQDDFQDAVNSVFGLPETPKTIEESSLDPDRILSLWQKLIEMPVLQRPDWLRSSIRHIFLVTMGLPVDLDELLPTPSTQGSFNSSRTIELSSVTLPKSEDEPYLDYSAARRLCSINKDALTHRSHESLQQHIELLESTLQQAVEVARYWTDKRDSALSDKLLYETVVDDLVQHSKRLRNSGRKFLSRRSTSSHK.

Positions 1-72 are disordered; the sequence is MASPPILSRE…LNPVEDYDSK (72 aa). Positions 24-38 are enriched in polar residues; that stretch reads GGNSEVNIDPSASSS. Over residues 49–58 the composition is skewed to basic and acidic residues; sequence ADTKIDPHLL. The segment covering 59-68 has biased composition (acidic residues); sequence EEDDLNPVED.

It localises to the cytoplasm. Its subcellular location is the nucleus. This is an uncharacterized protein from Schizosaccharomyces pombe (strain 972 / ATCC 24843) (Fission yeast).